Reading from the N-terminus, the 406-residue chain is 3-oxoacyl-[acyl-carrier-protein] synthase 1 (406 aa).

Positions M1 to K403 constitute a Ketosynthase family 3 (KS3) domain. Active-site for beta-ketoacyl synthase activity residues include C163, H298, and H333.

It belongs to the thiolase-like superfamily. Beta-ketoacyl-ACP synthases family. As to quaternary structure, homodimer.

The protein localises to the cytoplasm. It catalyses the reaction a fatty acyl-[ACP] + malonyl-[ACP] + H(+) = a 3-oxoacyl-[ACP] + holo-[ACP] + CO2. The enzyme catalyses (3Z)-decenoyl-[ACP] + malonyl-[ACP] + H(+) = 3-oxo-(5Z)-dodecenoyl-[ACP] + holo-[ACP] + CO2. It participates in lipid metabolism; fatty acid biosynthesis. In terms of biological role, involved in the type II fatty acid elongation cycle. Catalyzes the elongation of a wide range of acyl-ACP by the addition of two carbons from malonyl-ACP to an acyl acceptor. Can also use unsaturated fatty acids. Catalyzes a key reaction in unsaturated fatty acid (UFA) synthesis, the elongation of the cis-3-decenoyl-ACP produced by FabA. The chain is 3-oxoacyl-[acyl-carrier-protein] synthase 1 (fabB) from Escherichia coli O6:H1 (strain CFT073 / ATCC 700928 / UPEC).